The following is a 358-amino-acid chain: Fructose-bisphosphate aldolase (358 aa).

Residue serine 61 participates in D-glyceraldehyde 3-phosphate binding. Catalysis depends on aspartate 108, which acts as the Proton donor. Zn(2+) is bound by residues histidine 109, aspartate 143, glutamate 173, and histidine 225. Glycine 226 is a binding site for dihydroxyacetone phosphate. Histidine 264 contributes to the Zn(2+) binding site. Residues 265-267 (GGS) and 286-289 (NIDT) each bind dihydroxyacetone phosphate. Residues threonine 289, threonine 312, threonine 340, and threonine 342 each carry the phosphothreonine modification.

The protein belongs to the class II fructose-bisphosphate aldolase family. In terms of assembly, homodimer. Zn(2+) is required as a cofactor.

It catalyses the reaction beta-D-fructose 1,6-bisphosphate = D-glyceraldehyde 3-phosphate + dihydroxyacetone phosphate. It participates in carbohydrate degradation; glycolysis; D-glyceraldehyde 3-phosphate and glycerone phosphate from D-glucose: step 4/4. In terms of biological role, catalyzes the aldol condensation of dihydroxyacetone phosphate (DHAP or glycerone-phosphate) with glyceraldehyde 3-phosphate (G3P) to form fructose 1,6-bisphosphate (FBP) in gluconeogenesis and the reverse reaction in glycolysis. The sequence is that of Fructose-bisphosphate aldolase (fba1) from Schizosaccharomyces pombe (strain 972 / ATCC 24843) (Fission yeast).